Consider the following 133-residue polypeptide: uncharacterized protein (133 aa).

It belongs to the mimivirus L15/L51/R83 family.

This is an uncharacterized protein from Acanthamoeba polyphaga (Amoeba).